The sequence spans 294 residues: Small ribosomal subunit biogenesis GTPase RsgA (294 aa).

The CP-type G domain maps to 63–223 (KNELLRPPIA…VADTPGFSSL (161 aa)). GTP contacts are provided by residues 112–115 (SKID) and 166–174 (GQSGVGKSS). Positions 247, 252, 254, and 260 each coordinate Zn(2+).

This sequence belongs to the TRAFAC class YlqF/YawG GTPase family. RsgA subfamily. As to quaternary structure, monomer. Associates with 30S ribosomal subunit, binds 16S rRNA. It depends on Zn(2+) as a cofactor.

It localises to the cytoplasm. Functionally, one of several proteins that assist in the late maturation steps of the functional core of the 30S ribosomal subunit. Helps release RbfA from mature subunits. May play a role in the assembly of ribosomal proteins into the subunit. Circularly permuted GTPase that catalyzes slow GTP hydrolysis, GTPase activity is stimulated by the 30S ribosomal subunit. This chain is Small ribosomal subunit biogenesis GTPase RsgA, found in Halalkalibacterium halodurans (strain ATCC BAA-125 / DSM 18197 / FERM 7344 / JCM 9153 / C-125) (Bacillus halodurans).